The following is a 99-amino-acid chain: Small ribosomal subunit protein bS20 (99 aa).

The protein belongs to the bacterial ribosomal protein bS20 family.

Binds directly to 16S ribosomal RNA. This Synechococcus sp. (strain CC9311) protein is Small ribosomal subunit protein bS20.